A 433-amino-acid chain; its full sequence is Enolase (433 aa).

Residue Q167 participates in (2R)-2-phosphoglycerate binding. The active-site Proton donor is the E209. 3 residues coordinate Mg(2+): D246, E291, and D318. 4 residues coordinate (2R)-2-phosphoglycerate: K343, R372, S373, and K394. Residue K343 is the Proton acceptor of the active site.

This sequence belongs to the enolase family. As to quaternary structure, component of the RNA degradosome, a multiprotein complex involved in RNA processing and mRNA degradation. It depends on Mg(2+) as a cofactor.

The protein resides in the cytoplasm. Its subcellular location is the secreted. It is found in the cell surface. The catalysed reaction is (2R)-2-phosphoglycerate = phosphoenolpyruvate + H2O. Its pathway is carbohydrate degradation; glycolysis; pyruvate from D-glyceraldehyde 3-phosphate: step 4/5. In terms of biological role, catalyzes the reversible conversion of 2-phosphoglycerate (2-PG) into phosphoenolpyruvate (PEP). It is essential for the degradation of carbohydrates via glycolysis. In Pasteurella multocida (strain Pm70), this protein is Enolase.